Here is a 200-residue protein sequence, read N- to C-terminus: Coiled-coil domain-containing protein 28B (200 aa).

At Met1 the chain carries N-acetylmethionine. A compositionally biased stretch (basic residues) spans 1–10; it reads MDDKKKKRSP. A disordered region spans residues 1 to 49; sequence MDDKKKKRSPKPCLAQPAQAPGTLRRVPVPTSHSGSLALGLPHLPSPKQ. Phosphoserine is present on residues Ser46 and Ser115. The segment covering 141 to 152 has biased composition (acidic residues); the sequence is EEEDDEEEEDGV. A disordered region spans residues 141–164; sequence EEEDDEEEEDGVTEGLPEEQKKTM. Residues 158–183 are a coiled coil; it reads EEQKKTMADRNLDQLLSNLEDLSNSI.

Interacts with BBS1, BBS2, BBS4, BBS5, BBS6, BBS7 and TTC8/BBS8. Interacts with MAPKAP1/SIN1 isoform 1 and RICTOR.

It localises to the cytoplasm. Its subcellular location is the cytoskeleton. The protein resides in the microtubule organizing center. The protein localises to the centrosome. Involved in ciliogenesis. Regulates cilia length through its interaction with MAPKAP1/SIN1 but independently of mTORC2 complex. Modulates mTORC2 complex assembly and function, possibly enhances AKT1 phosphorylation. Does not seem to modulate assembly and function of mTORC1 complex. This Homo sapiens (Human) protein is Coiled-coil domain-containing protein 28B (CCDC28B).